The primary structure comprises 100 residues: Proline-rich protein 15-like protein (100 aa).

Residues 29 to 51 form a disordered region; sequence YAQTEGGAEPPGPDAGDPHSDFN.

Belongs to the PRR15 family.

The sequence is that of Proline-rich protein 15-like protein (Prr15l) from Mus musculus (Mouse).